The sequence spans 104 residues: Nucleoid-associated protein jk2011 (104 aa).

Belongs to the YbaB/EbfC family. Homodimer.

The protein localises to the cytoplasm. It localises to the nucleoid. Functionally, binds to DNA and alters its conformation. May be involved in regulation of gene expression, nucleoid organization and DNA protection. This Corynebacterium jeikeium (strain K411) protein is Nucleoid-associated protein jk2011.